A 367-amino-acid polypeptide reads, in one-letter code: Mitogen-activated protein kinase 12 (367 aa).

One can recognise a Protein kinase domain in the interval 27-311; it reads YRDLQPVGSG…AGEALAHPYF (285 aa). ATP contacts are provided by residues 33–41 and lysine 56; that span reads VGSGAYGAV. Aspartate 153 functions as the Proton acceptor in the catalytic mechanism. Threonine 183 carries the phosphothreonine; by MAP2K3 and MAP2K6 modification. The short motif at 183–185 is the TXY element; sequence TGY. Tyrosine 185 carries the phosphotyrosine modification.

The protein belongs to the protein kinase superfamily. CMGC Ser/Thr protein kinase family. MAP kinase subfamily. Monomer. Interacts with the PDZ domain of the syntrophin SNTA1. Interacts with SH3BP5. Interacts with LIN7C, SCRIB and SYNJ2BP. Interacts with PTPN4; this interaction induces the activation of PTPN4 phosphatase activity. Requires Mg(2+) as cofactor. Dually phosphorylated on Thr-183 and Tyr-185 by MAP2K3/MKK3 and MAP2K6/MKK6, which activates the enzyme. In terms of processing, ubiquitinated. Ubiquitination leads to degradation by the proteasome pathway. Highly expressed in skeletal muscle and heart.

The protein localises to the cytoplasm. It localises to the nucleus. It is found in the mitochondrion. The catalysed reaction is L-seryl-[protein] + ATP = O-phospho-L-seryl-[protein] + ADP + H(+). It carries out the reaction L-threonyl-[protein] + ATP = O-phospho-L-threonyl-[protein] + ADP + H(+). Its activity is regulated as follows. Activated by phosphorylation on threonine and tyrosine. MAP2K3/MKK3 and MAP2K6/MKK6 are both essential for the activation of MAPK12 induced by environmental stress, whereas MAP2K6/MKK6 is the major MAPK12 activator in response to TNF-alpha. Serine/threonine kinase which acts as an essential component of the MAP kinase signal transduction pathway. MAPK12 is one of the four p38 MAPKs which play an important role in the cascades of cellular responses evoked by extracellular stimuli such as pro-inflammatory cytokines or physical stress leading to direct activation of transcription factors such as ELK1 and ATF2. Accordingly, p38 MAPKs phosphorylate a broad range of proteins and it has been estimated that they may have approximately 200 to 300 substrates each. Some of the targets are downstream kinases such as MAPKAPK2, which are activated through phosphorylation and further phosphorylate additional targets. Plays a role in myoblast differentiation and also in the down-regulation of cyclin D1 in response to hypoxia in adrenal cells suggesting MAPK12 may inhibit cell proliferation while promoting differentiation. Phosphorylates DLG1. Following osmotic shock, MAPK12 in the cell nucleus increases its association with nuclear DLG1, thereby causing dissociation of DLG1-SFPQ complexes. This function is independent of its catalytic activity and could affect mRNA processing and/or gene transcription to aid cell adaptation to osmolarity changes in the environment. Regulates UV-induced checkpoint signaling and repair of UV-induced DNA damage and G2 arrest after gamma-radiation exposure. MAPK12 is involved in the regulation of SLC2A1 expression and basal glucose uptake in L6 myotubes; and negatively regulates SLC2A4 expression and contraction-mediated glucose uptake in adult skeletal muscle. C-Jun (JUN) phosphorylation is stimulated by MAPK14 and inhibited by MAPK12, leading to a distinct AP-1 regulation. MAPK12 is required for the normal kinetochore localization of PLK1, prevents chromosomal instability and supports mitotic cell viability. MAPK12-signaling is also positively regulating the expansion of transient amplifying myogenic precursor cells during muscle growth and regeneration. The sequence is that of Mitogen-activated protein kinase 12 (MAPK12) from Homo sapiens (Human).